Reading from the N-terminus, the 122-residue chain is Basic phospholipase A2 Cdr-13 (122 aa).

7 disulfides stabilise this stretch: Cys26-Cys115, Cys28-Cys44, Cys43-Cys95, Cys49-Cys122, Cys50-Cys88, Cys57-Cys81, and Cys75-Cys86. Tyr27, Gly29, and Gly31 together coordinate Ca(2+). His47 is a catalytic residue. A Ca(2+)-binding site is contributed by Asp48. Asp89 is an active-site residue.

Ca(2+) serves as cofactor. In terms of tissue distribution, expressed by the venom gland.

It localises to the secreted. It catalyses the reaction a 1,2-diacyl-sn-glycero-3-phosphocholine + H2O = a 1-acyl-sn-glycero-3-phosphocholine + a fatty acid + H(+). In terms of biological role, snake venom phospholipase A2 (PLA2) that induces myonecrosis and edema upon subcutaneous injections in mice. In vitro, causes a potent blockade of neuromuscular transmission in young chicken biventer cervicis preparation and produces cytotoxicity in murine C2C12 skeletal muscle myotubes and lack cytolytic activity upon myoblasts in vitro. PLA2 catalyzes the calcium-dependent hydrolysis of the 2-acyl groups in 3-sn-phosphoglycerides. The sequence is that of Basic phospholipase A2 Cdr-13 from Crotalus durissus ruruima (South American rattlesnake).